The chain runs to 693 residues: TBC1 domain family member 12 (693 aa).

M1 bears the N-acetylmethionine mark. 3 disordered regions span residues 1–57 (MMGP…EAPP), 91–120 (RGSG…RRTC), and 156–229 (AAGD…TTVR). Residues 40 to 49 (GAVAAEPPGE) show a composition bias toward low complexity. The span at 106-115 (QDRRGPEEAR) shows a compositional bias: basic and acidic residues. 2 positions are modified to phosphoserine: S202 and S233. One can recognise a Rab-GAP TBC domain in the interval 402–610 (GLPPSVRGKV…RVWDVFCRDG (209 aa)).

Interacts with RAB11A; this interaction recruits TBC1D12 to RAB11A-positive recycling endosomes.

It localises to the endosome. In terms of biological role, RAB11A-binding protein that plays a role in neurite outgrowth. The protein is TBC1 domain family member 12 (Tbc1d12) of Rattus norvegicus (Rat).